Consider the following 195-residue polypeptide: Holliday junction branch migration complex subunit RuvA (195 aa).

Residues 1–64 are domain I; it reads MIASIRGIIQ…EDALTLYGFS (64 aa). A domain II region spans residues 65–142; the sequence is DPAQRNLFEQ…DLRQLSGTTP (78 aa). The interval 143–151 is flexible linker; sequence GNVSTLDRE. The segment at 151–195 is domain III; it reads ELTDILISLGYSATEAAAAIAALPGDAPPTLEERLRLALRYFGSA.

This sequence belongs to the RuvA family. As to quaternary structure, homotetramer. Forms an RuvA(8)-RuvB(12)-Holliday junction (HJ) complex. HJ DNA is sandwiched between 2 RuvA tetramers; dsDNA enters through RuvA and exits via RuvB. An RuvB hexamer assembles on each DNA strand where it exits the tetramer. Each RuvB hexamer is contacted by two RuvA subunits (via domain III) on 2 adjacent RuvB subunits; this complex drives branch migration. In the full resolvosome a probable DNA-RuvA(4)-RuvB(12)-RuvC(2) complex forms which resolves the HJ.

It localises to the cytoplasm. The RuvA-RuvB-RuvC complex processes Holliday junction (HJ) DNA during genetic recombination and DNA repair, while the RuvA-RuvB complex plays an important role in the rescue of blocked DNA replication forks via replication fork reversal (RFR). RuvA specifically binds to HJ cruciform DNA, conferring on it an open structure. The RuvB hexamer acts as an ATP-dependent pump, pulling dsDNA into and through the RuvAB complex. HJ branch migration allows RuvC to scan DNA until it finds its consensus sequence, where it cleaves and resolves the cruciform DNA. The polypeptide is Holliday junction branch migration complex subunit RuvA (Chloroflexus aurantiacus (strain ATCC 29364 / DSM 637 / Y-400-fl)).